We begin with the raw amino-acid sequence, 503 residues long: GMP synthase [glutamine-hydrolyzing] (503 aa).

One can recognise a Glutamine amidotransferase type-1 domain in the interval 1 to 178 (MREANVYSEI…LHRAAGIPAD (178 aa)). Cysteine 60 serves as the catalytic Nucleophile. Residues histidine 152 and glutamate 154 contribute to the active site. Residues 179–377 (WNSGNVIADQ…LGLPEVIVGR (199 aa)) form the GMPS ATP-PPase domain. 206–212 (SGGVDSA) is a binding site for ATP.

As to quaternary structure, homodimer.

The catalysed reaction is XMP + L-glutamine + ATP + H2O = GMP + L-glutamate + AMP + diphosphate + 2 H(+). It functions in the pathway purine metabolism; GMP biosynthesis; GMP from XMP (L-Gln route): step 1/1. In terms of biological role, catalyzes the synthesis of GMP from XMP. The sequence is that of GMP synthase [glutamine-hydrolyzing] from Leifsonia xyli subsp. xyli (strain CTCB07).